The chain runs to 442 residues: Protein UNUSUAL FLORAL ORGANS (442 aa).

The interval 1–85 is interaction with SKP1A; the sequence is MDSTVFINNP…RFYSLLFSNT (85 aa). The F-box domain maps to 44–90; it reads GRIWSKLPPPLLDRVIAFLPPPAFFRTRCVCKRFYSLLFSNTFLETY.

Part of a putative SCF (ASK/Cullin/F-box) ubiquitin ligase complex. Interacts with SKP1A/ASK1, SKP1B/ASK2 and ASK11.

The protein localises to the nucleus. Its pathway is protein modification; protein ubiquitination. Its function is as follows. Component of SCF(ASK-cullin-F-box) E3 ubiquitin ligase complexes, which may mediate the ubiquitination and subsequent proteasomal degradation of target proteins. Considered as a meristem identity factor required for normal growth of the young floral meristem. Acts together with LEAFY to positively regulate the B class floral homeotic genes APETALA3 and PISTILLATA. In this way, operates as a region-specific regulator for petal and stamen development. Alternatively, may play a role as a negative regulator of the C class floral homeotic genes. Interacts together with the SKP1-like protein ASK1 to form a ubiquitin E3 ligase complex and could indirectly promote the ubiquitination and degradation of specific proteins controlling the floral primordia development like repressors of B class floral homeotic genes. The polypeptide is Protein UNUSUAL FLORAL ORGANS (UFO) (Arabidopsis thaliana (Mouse-ear cress)).